The following is an 821-amino-acid chain: High affinity potassium transporter (821 aa).

Residues 1 to 10 (MSDSQSNKQN) are compositionally biased toward polar residues. The segment at 1 to 47 (MSDSQSNKQNQGEDDNNVSSSIESNENYPFRLNDEESEPQSSTTESM) is disordered. Topologically, residues 1–57 (MSDSQSNKQNQGEDDNNVSSSIESNENYPFRLNDEESEPQSSTTESMLKAKKQSWRQ) are cytoplasmic. The span at 17 to 27 (NVSSSIESNEN) shows a compositional bias: low complexity. Residues 58–78 (VLMLGFSSLGAIYGDIGTSPL) traverse the membrane as a helical segment. The Extracellular portion of the chain corresponds to 79 to 101 (YVLNSIKYPNSSPTEEDIYGAIS). Residues 102 to 122 (IIFYLFTFIVIFKYILIVLFL) form a helical membrane-spanning segment. The Cytoplasmic segment spans residues 123-190 (GTNDGEGGQV…KASGFKTNPK (68 aa)). Residues 191–211 (LIKFISKFILFGCFFGCSLVM) traverse the membrane as a helical segment. Residues 212–238 (SDGLLTPTTSVLSAIAGIQIANPSFND) are Extracellular-facing. The chain crosses the membrane as a helical span at residues 239–259 (VLAVSEVVLIVLFLIQQFGSN). Residue K260 is a topological domain, cytoplasmic. Residues 261–281 (ISFTFAPIIFLWLIGLIISGI) form a helical membrane-spanning segment. Over 282–306 (YNIVKFHPAVFKSLSPYYAIQLLKH) the chain is Extracellular. The helical transmembrane segment at 307–327 (SGIDVFSGAMLSITGTEAMFA) threads the bilayer. Topologically, residues 328–340 (DVGHFGRLPIQLT) are cytoplasmic. Residues 341–361 (LTLFVYPALIICYLGQGAYII) form a helical membrane-spanning segment. The Extracellular portion of the chain corresponds to 362–386 (KHPEALSNPFFYSIPGGLNSWIYWV). Residues 387–407 (MFVLATLSTIIASQALILGVF) form a helical membrane-spanning segment. The Cytoplasmic segment spans residues 408–434 (SITSQLINLDCFPNFKIIHVSKKYAGK). Residues 435–455 (VYIPAINWLLMIGVCATTAGF) form a helical membrane-spanning segment. Residues 456–463 (KNSNNVTA) are Extracellular-facing. N460 carries N-linked (GlcNAc...) asparagine glycosylation. The helical transmembrane segment at 464–484 (AYGLGITLDFLVTSSLIMVCM) threads the bilayer. At 485–491 (TYVYNWN) the chain is on the cytoplasmic side. A helical membrane pass occupies residues 492-512 (ILIPITYALIFLPLEVIMVIS). The Extracellular portion of the chain corresponds to 513–516 (NLKK). The chain crosses the membrane as a helical span at residues 517–537 (ITHGAWFPLMMSGIFMMFLSF). Over 538–821 (WRWARSRKVN…KMFLGGVVRI (284 aa)) the chain is Cytoplasmic.

Belongs to the HAK/KUP transporter (TC 2.A.72) family.

It localises to the membrane. Functionally, major high-affinity potassium uptake protein. The chain is High affinity potassium transporter (HAK1) from Schwanniomyces occidentalis (Yeast).